A 334-amino-acid polypeptide reads, in one-letter code: Ethanol acetyltransferase 1 (334 aa).

The transit peptide at 1 to 16 directs the protein to the mitochondrion; it reads MFASNVVVLNKRSIRF. Active-site charge relay system residues include serine 124, aspartate 148, and histidine 296.

The protein belongs to the AB hydrolase superfamily.

The protein localises to the mitochondrion. The enzyme catalyses ethanol + acetyl-CoA = ethyl acetate + CoA. It catalyses the reaction acetyl-CoA + H2O = acetate + CoA + H(+). It carries out the reaction ethyl acetate + H2O = ethanol + acetate + H(+). Its function is as follows. Alcohol acetyltransferase that catalyzes the synthesis of ethyl acetate from ethanol and acetyl-CoA. Can also function as a thioesterase by hydrolyzing acetyl-CoA in the absence of ethanol, as well as esterase hydrolyzing ethyl acetate. In Hanseniaspora uvarum (Yeast), this protein is Ethanol acetyltransferase 1 (EAT1).